The chain runs to 574 residues: Lengsin (574 aa).

Disordered regions lie at residues 1 to 36 and 66 to 131; these read MNDE…KVTK and GNMS…IPTT. Basic and acidic residues predominate over residues 11–23; that stretch reads NTRDEGNETEASR. Basic residues predominate over residues 25–36; the sequence is SKLRRTRKKVTK. Residues 91 to 131 show a composition bias toward polar residues; the sequence is NQTTVIKPSPLKTSASAPCSEFNTNSNHADNTWEDTQIPTT. Residues 148-242 enclose the GS beta-grasp domain; it reads NHLQFVRFEA…VICDTFTVTG (95 aa). Residues 249-574 form the GS catalytic domain; the sequence is PRYIAKRQLS…ERNKFLEYFI (326 aa).

Belongs to the glutamine synthetase family. Dodecamer. Interacts with BFSP2 and VIM.

Functionally, may act as a component of the cytoskeleton or as a chaperone for the reorganization of intermediate filament proteins during terminal differentiation in the lens. Does not seem to have enzymatic activity. The polypeptide is Lengsin (LGSN) (Canis lupus familiaris (Dog)).